A 469-amino-acid polypeptide reads, in one-letter code: Programmed cell death protein 4 (469 aa).

Met1 carries the post-translational modification N-acetylmethionine. 2 disordered regions span residues 1 to 30 (MDVENEQILNVNPTDPDNLSDSLFSGDEEN) and 58 to 128 (KAKR…GTPG). Residues 7-23 (QILNVNPTDPDNLSDSL) are compositionally biased toward polar residues. At Ser25 the chain carries Phosphoserine. The Nuclear localization signal motif lies at 58 to 64 (KAKRRLR). The residue at position 67 (Ser67) is a Phosphoserine; by PKB and RPS6KB1. Ser68, Ser71, Ser76, Ser78, and Ser94 each carry phosphoserine. The short motif at 70–76 (DSGRGDS) is the Phosphodegron element. Residues 114–125 (KKGGAGGKGVWG) are compositionally biased toward gly residues. Tyr152 is subject to Phosphotyrosine. The MI 1 domain occupies 163 to 284 (AFEKTLTPII…CNTYIDSYKG (122 aa)). Residues Ser313 and Ser317 each carry the phosphoserine modification. Positions 326-449 (HLVKEIDMLL…SKQLRDLCPS (124 aa)) constitute an MI 2 domain. Residues 448-454 (PSRGRKR) carry the Nuclear localization signal motif. Residue Ser457 is modified to Phosphoserine.

This sequence belongs to the PDCD4 family. In terms of assembly, interacts (via MI domains) with EIF4A2. Interacts (via MI domains) with EIF4A1 (via N-terminal domain). Heterotrimer with EIF4A1; one molecule of PDCD4 binds two molecules of EIF4A1. Interacts with EIF4G1. May form a complex with EIF4A1 and EIF4G1. The interaction between PDCD4 and EIF4A1 interferes with the interaction between EIF4A1 and EIF4G. When phosphorylated, interacts with BTRC and FBXW11. In terms of processing, polyubiquitinated, leading to its proteasomal degradation. Rapidly degraded in response to mitogens. Phosphorylation of the phosphodegron promotes interaction with BTRC and proteasomal degradation. Post-translationally, phosphorylated at Ser-67 by RPS6KB1 in response to mitogens; phosphorylation promotes proteasomal degradation of PDCD4.

The protein localises to the nucleus. It localises to the cytoplasm. Its function is as follows. Inhibits translation initiation and cap-dependent translation. May excert its function by hindering the interaction between EIF4A1 and EIF4G. Inhibits the helicase activity of EIF4A. Modulates the activation of JUN kinase. Down-regulates the expression of MAP4K1, thus inhibiting events important in driving invasion, namely, MAPK85 activation and consequent JUN-dependent transcription. May play a role in apoptosis. Tumor suppressor. Inhibits tumor promoter-induced neoplastic transformation. Binds RNA. The chain is Programmed cell death protein 4 (Pdcd4) from Rattus norvegicus (Rat).